Consider the following 267-residue polypeptide: Diphthine--ammonia ligase (267 aa).

Tyrosine 97 bears the Phosphotyrosine mark.

This sequence belongs to the Diphthine--ammonia ligase family.

It catalyses the reaction diphthine-[translation elongation factor 2] + NH4(+) + ATP = diphthamide-[translation elongation factor 2] + AMP + diphosphate + H(+). Its pathway is protein modification; peptidyl-diphthamide biosynthesis. Its function is as follows. Amidase that catalyzes the last step of diphthamide biosynthesis using ammonium and ATP. Diphthamide biosynthesis consists in the conversion of an L-histidine residue in the translation elongation factor eEF-2 (EEF2) to diphthamide. This chain is Diphthine--ammonia ligase (DPH6), found in Bos taurus (Bovine).